The sequence spans 49 residues: Defensin Tm-AMP-D1.2 (49 aa).

4 disulfide bridges follow: Cys3-Cys49, Cys14-Cys34, Cys20-Cys43, and Cys24-Cys45.

Its function is as follows. Plant defense peptide. In Triticum monococcum (Einkorn wheat), this protein is Defensin Tm-AMP-D1.2.